Reading from the N-terminus, the 296-residue chain is mRNA export factor rsm1 (296 aa).

The C3HC-type zinc-finger motif lies at 40-174 (PWSREEFLRR…VSTHLPEEMT (135 aa)).

Its subcellular location is the cytoplasm. The protein localises to the nucleus. Functionally, involved in the export of mRNA from the nucleus to the cytoplasm. This is mRNA export factor rsm1 (rsm1) from Schizosaccharomyces pombe (strain 972 / ATCC 24843) (Fission yeast).